A 204-amino-acid polypeptide reads, in one-letter code: Tumor protein D53 (204 aa).

Residues M1–L31 are disordered. Residues V22–M73 are a coiled coil. S29, S86, S122, and S131 each carry phosphoserine. R133 carries the post-translational modification Omega-N-methylarginine. T146 carries the post-translational modification Phosphothreonine. Phosphoserine is present on residues S149 and S174. The interval K164–C204 is disordered. Positions L179–R195 are enriched in polar residues.

The protein belongs to the TPD52 family. As to quaternary structure, forms a homodimer or heterodimer with other members of the family.

The protein is Tumor protein D53 (Tpd52l1) of Mus musculus (Mouse).